Consider the following 886-residue polypeptide: Protein suppressor of hairy wing (886 aa).

Disordered stretches follow at residues Ser24–Gly62 and Asp167–Gly211. Acidic residues predominate over residues Val184 to Asp201. The C2H2-type 1; atypical zinc finger occupies His221–Cys243. A C2H2-type 2 zinc finger spans residues Ile291–His314. The C2H2-type 3; atypical zinc-finger motif lies at Tyr320 to His342. C2H2-type zinc fingers lie at residues Tyr349–His367, Met381–His403, Tyr414–His436, Phe442–His464, Tyr470–His492, His498–His520, Phe524–His546, Phe554–His578, and Thr600–His623. Positions Gln571–Gln587 are enriched in basic and acidic residues. Residues Gln571–Thr594 are disordered.

The protein localises to the nucleus. Component of the gypsy chromatin insulator complex which is required for the function of the gypsy chromatin insulator and other endogenous chromatin insulators. Chromatin insulators are regulatory elements which establish independent domains of transcriptional activity within eukaryotic genomes. Insulators have two defining properties; they can block the communication between an enhancer and a promoter when placed between them and can also buffer transgenes from position effect variegation (PEV). Insulators are proposed to structure the chromatin fiber into independent domains of differing transcriptional potential by promoting the formation of distinct chromatin loops. This chromatin looping may involve the formation of insulator bodies, where homotypic interactions between individual subunits of the insulator complex could promote the clustering of widely spaced insulators at the nuclear periphery. Within the gypsy insulator complex, this protein binds specifically to a region of the gypsy element located 3' of the 5' long terminal repeat (LTR), and may also mediate interaction with other endogenous insulators at sites distinct from those recognized by Cp190. Cooperates with pita and cliff to recruit Cp190 and regulate insulator function at the front-ultraabdominal (Fub) boundary. The protein is Protein suppressor of hairy wing (su(Hw)) of Drosophila ananassae (Fruit fly).